Reading from the N-terminus, the 625-residue chain is DNA mismatch repair protein MutL (625 aa).

It belongs to the DNA mismatch repair MutL/HexB family.

In terms of biological role, this protein is involved in the repair of mismatches in DNA. It is required for dam-dependent methyl-directed DNA mismatch repair. May act as a 'molecular matchmaker', a protein that promotes the formation of a stable complex between two or more DNA-binding proteins in an ATP-dependent manner without itself being part of a final effector complex. This is DNA mismatch repair protein MutL from Xanthomonas axonopodis pv. citri (strain 306).